The chain runs to 90 residues: uncharacterized protein (90 aa).

This is an uncharacterized protein from Escherichia coli O157:H7.